A 49-amino-acid chain; its full sequence is Lysozyme C (49 aa).

Positions 1–49 (SKMKKCEFAKIAKEQHMDGYHGVSLADWVCLVNNESDFNTKAINRNKGI) constitute a C-type lysozyme domain. The active site involves Glu35.

It belongs to the glycosyl hydrolase 22 family. In terms of assembly, monomer.

It localises to the secreted. It catalyses the reaction Hydrolysis of (1-&gt;4)-beta-linkages between N-acetylmuramic acid and N-acetyl-D-glucosamine residues in a peptidoglycan and between N-acetyl-D-glucosamine residues in chitodextrins.. Its function is as follows. Lysozymes have primarily a bacteriolytic function; those in tissues and body fluids are associated with the monocyte-macrophage system and enhance the activity of immunoagents. This chain is Lysozyme C (LYZ), found in Pseudocheirus peregrinus (Common ring-tailed possum).